The primary structure comprises 396 residues: Peroxisome proliferator-activated receptor delta (396 aa).

Positions 1–24 are disordered; sequence MKEEIPPRSPILDEQPSTPLEHQE. Residues 15–24 show a composition bias toward polar residues; it reads QPSTPLEHQE. A DNA-binding region (nuclear receptor) is located at residues 28–102; sequence SVDCKICGDR…LGMSHNAIRF (75 aa). 2 consecutive NR C4-type zinc fingers follow at residues 31-51 and 68-90; these read CKICGDRASGFHYGVHACEGC and CDRNCKIQKKNRNKCQYCRFNKC. Residues 166–394 enclose the NR LBD domain; sequence FVIHDMDTLW…HPLLQEIYRD (229 aa).

The protein belongs to the nuclear hormone receptor family. NR1 subfamily. Heterodimer with the retinoid X receptor. Post-translationally, 'Lys-48'-linked polyubiquitinated; leading to proteasomal degradation. Deubiquitinated and stabilized by OTUD3. As to expression, ubiquitous.

The protein localises to the nucleus. Ligand-activated transcription factor key mediator of energy metabolism in adipose tissues. Receptor that binds peroxisome proliferators such as hypolipidemic drugs and fatty acids. Has a preference for poly-unsaturated fatty acids, such as gamma-linoleic acid and eicosapentanoic acid. Once activated by a ligand, the receptor binds to promoter elements of target genes. Regulates the peroxisomal beta-oxidation pathway of fatty acids. Functions as a transcription activator for the acyl-CoA oxidase gene. Decreases expression of NPC1L1 once activated by a ligand. The chain is Peroxisome proliferator-activated receptor delta (ppard) from Xenopus laevis (African clawed frog).